The sequence spans 388 residues: Isocitrate dehydrogenase [NAD] subunit 1, mitochondrial (388 aa).

Residues 1–35 (MFSLRTAQPAQSLFRAATNTYSTSLPRSAIAARSF) constitute a mitochondrion transit peptide. Positions 137, 168, and 255 each coordinate substrate. D255 contributes to the Mg(2+) binding site.

It belongs to the isocitrate and isopropylmalate dehydrogenases family. As to quaternary structure, octamer of two non-identical subunits IDH1 and IDH2. It depends on Mg(2+) as a cofactor. The cofactor is Mn(2+).

The protein resides in the mitochondrion. The catalysed reaction is D-threo-isocitrate + NAD(+) = 2-oxoglutarate + CO2 + NADH. Performs an essential role in the oxidative function of the citric acid cycle. The protein is Isocitrate dehydrogenase [NAD] subunit 1, mitochondrial (IDH1) of Ajellomyces capsulatus (Darling's disease fungus).